Consider the following 641-residue polypeptide: UvrABC system protein C (641 aa).

Residues Glu-16–Ile-95 enclose the GIY-YIG domain. Positions Thr-208–Ala-243 constitute a UVR domain.

It belongs to the UvrC family. Interacts with UvrB in an incision complex.

It localises to the cytoplasm. Functionally, the UvrABC repair system catalyzes the recognition and processing of DNA lesions. UvrC both incises the 5' and 3' sides of the lesion. The N-terminal half is responsible for the 3' incision and the C-terminal half is responsible for the 5' incision. This is UvrABC system protein C from Acidothermus cellulolyticus (strain ATCC 43068 / DSM 8971 / 11B).